The primary structure comprises 368 residues: 4-hydroxy-3-methylbut-2-en-1-yl diphosphate synthase (flavodoxin) (368 aa).

[4Fe-4S] cluster contacts are provided by cysteine 271, cysteine 274, cysteine 306, and glutamate 313.

It belongs to the IspG family. Requires [4Fe-4S] cluster as cofactor.

The catalysed reaction is (2E)-4-hydroxy-3-methylbut-2-enyl diphosphate + oxidized [flavodoxin] + H2O + 2 H(+) = 2-C-methyl-D-erythritol 2,4-cyclic diphosphate + reduced [flavodoxin]. It functions in the pathway isoprenoid biosynthesis; isopentenyl diphosphate biosynthesis via DXP pathway; isopentenyl diphosphate from 1-deoxy-D-xylulose 5-phosphate: step 5/6. Functionally, converts 2C-methyl-D-erythritol 2,4-cyclodiphosphate (ME-2,4cPP) into 1-hydroxy-2-methyl-2-(E)-butenyl 4-diphosphate. This chain is 4-hydroxy-3-methylbut-2-en-1-yl diphosphate synthase (flavodoxin), found in Histophilus somni (strain 129Pt) (Haemophilus somnus).